The primary structure comprises 997 residues: NLR family CARD domain-containing protein 4 (997 aa).

A CARD domain is found at 1–88; the sequence is MDLIRKNYAE…FFYEDLIGQR (88 aa). A nucleotide-binding domain (NBD) region spans residues 95 to 300; that stretch reads EEDLENLADH…RCGALIAETS (206 aa). The 314-residue stretch at 165 to 478 folds into the NACHT domain; the sequence is SPCVIEGEAG…VTKGEDFLNK (314 aa). An ATP-binding site is contributed by 171 to 178; it reads GEAGKGKT. The interval 358–465 is winged-helix domain (WHD); that stretch reads MNTQTTLFST…RLSQLLSSED (108 aa). LRR repeat units follow at residues 550–570, 629–652, 708–731, 735–758, 760–785, 797–820, 821–843, 851–875, 884–905, 908–935, 937–958, and 972–994; these read LFSE…HIEF, NQSI…DIKY, MTEM…LLEG, LVGL…TLAE, ILSL…ESIA, ELKL…LYSL, SHIE…SVEE, LDAI…VLPT, ELAF…SYIN, FENL…ILQY, PNLT…DLVR, and TMEL…AKNM.

It localises to the cytoplasm. Its subcellular location is the cytosol. Functionally, key component of inflammasomes that indirectly senses specific proteins from pathogenic bacteria and fungi and responds by assembling an inflammasome complex that promotes caspase-1 activation, cytokine production and macrophage pyroptosis. The chain is NLR family CARD domain-containing protein 4 (nlrc4) from Xenopus tropicalis (Western clawed frog).